We begin with the raw amino-acid sequence, 386 residues long: DNA-directed RNA polymerase subunit Rpo1C (386 aa).

The protein belongs to the RNA polymerase beta' chain family. In terms of assembly, part of the RNA polymerase complex.

It is found in the cytoplasm. The enzyme catalyses RNA(n) + a ribonucleoside 5'-triphosphate = RNA(n+1) + diphosphate. DNA-dependent RNA polymerase (RNAP) catalyzes the transcription of DNA into RNA using the four ribonucleoside triphosphates as substrates. Forms part of the jaw domain. This chain is DNA-directed RNA polymerase subunit Rpo1C, found in Methanococcus vannielii (strain ATCC 35089 / DSM 1224 / JCM 13029 / OCM 148 / SB).